Here is a 1503-residue protein sequence, read N- to C-terminus: Transient receptor potential cation channel subfamily M member 2 (1503 aa).

Residues 1–20 (MEPSALRKAGSEQEEGFEGL) form a disordered region. Topologically, residues 1 to 752 (MEPSALRKAG…WWGQLSVDNG (752 aa)) are cytoplasmic. ADP-D-ribose contacts are provided by threonine 174, asparagine 179, arginine 302, glycine 333, and threonine 336. Threonine 740 bears the Phosphothreonine mark. The stretch at 753–769 (LWRVTLCMLAFPLLLTG) is an intramembrane region. Over 770–795 (LISFREKRLQDVGTPAARARAFFTAP) the chain is Cytoplasmic. The chain crosses the membrane as a helical span at residues 796-816 (VVVFHLNILSYFAFLCLFAYV). Over 817 to 827 (LMVDFQPVPSW) the chain is Extracellular. Residues 828–848 (CECAIYLWLFSLVCEEMRQLF) form a helical membrane-spanning segment. Ca(2+) contacts are provided by glutamate 843 and glutamine 846. Residues 849–867 (YDPDECGLMKKAALYFSDF) lie on the Cytoplasmic side of the membrane. The helical transmembrane segment at 868–888 (WNKLDVGAILLFVAGLTCRLI) threads the bilayer. Residue asparagine 869 participates in Ca(2+) binding. The Extracellular segment spans residues 889-896 (PATLYPGR). A helical transmembrane segment spans residues 897–917 (VILSLDFILFCLRLMHIFTIS). Residues 918–929 (KTLGPKIIIVKR) are Cytoplasmic-facing. Residues 930–950 (MMKDVFFFLFLLAVWVVSFGV) form a helical membrane-spanning segment. Topologically, residues 951-970 (AKQAILIHNERRVDWLFRGA) are extracellular. Residues 971 to 985 (VYHSYLTIFGQIPGY) constitute an intramembrane region (pore-forming). Residues 979-982 (FGQI) carry the Selectivity filter motif. Topologically, residues 986-1022 (IDGVNFNPEHCSPNGTDPYKPKCPESDATQQRPAFPE) are extracellular. A disulfide bridge links cysteine 996 with cysteine 1008. The chain crosses the membrane as a helical span at residues 1023-1044 (WLTVLLLCLYLLFTNILLLNLL). Residues 1045–1079 (IAMFNYTFQQVQEHTDQIWKFQRHDLIEEYHGRPA) lie on the Cytoplasmic side of the membrane. Glutamate 1073 provides a ligand contact to Ca(2+). Residues 1080–1098 (APPPFILLSHLQLFIKRVV) lie within the membrane without spanning it. Topologically, residues 1099–1503 (LKTPAKRHKQ…KAAAEFGAHY (405 aa)) are cytoplasmic. Positions 1206–1237 (EADVPTLASQKAAEEPDAEPGGRKKTEEPGDS) are disordered. Positions 1354–1498 (RWRRNEDGAI…KTLLQKAAAE (145 aa)) constitute a Nudix hydrolase domain. ADP-D-ribose contacts are provided by leucine 1381 and serine 1382. The Nudix box motif lies at 1390-1411 (GSREPGEMLPRKLKRILRQEHW). 4 residues coordinate ADP-D-ribose: aspartate 1431, arginine 1433, tyrosine 1485, and asparagine 1487.

This sequence belongs to the transient receptor (TC 1.A.4) family. LTrpC subfamily. TRPM2 sub-subfamily. Homotetramer. Isoform 1 can interact with isoform 3. This interaction decreases Ca(2+) influx through isoform 1 and suppresses susceptibility to oxidative stress-induced cell death. In terms of processing, phosphorylation of TRPM2 at Thr-740 by protein kinase C (PKC) counteracts the effect of cytosolic Ca(2+) and elevates the temperature threshold. As to expression, highly expressed in brain and peripheral blood cells, such as neutrophils. Also detected in bone marrow, spleen, heart, liver and lung. Isoform 2 is found in neutrophil granulocytes.

The protein localises to the cell membrane. Its subcellular location is the perikaryon. It localises to the cell projection. It is found in the cytoplasmic vesicle. The protein resides in the lysosome. The catalysed reaction is Ca(2+)(in) = Ca(2+)(out). It carries out the reaction Na(+)(in) = Na(+)(out). With respect to regulation, activated by intracellular ADP-ribose, beta-NAD (NAD(+)) and similar compounds, and by oxidative stress caused by reactive oxygen or nitrogen species. Ca(2+) and PI(4,5)P2 are required for channel opening by ADP-ribose. Activation by ADP-ribose and beta-NAD is strongly increased by moderate heat (35 to 40 degrees Celsius). Likewise, reactive oxygen species lower the threshold for activation by moderate heat (37 degrees Celsius). Activated by moderate heat (35 to 40 degrees Celsius). Inactivated by exposure to extracellular pH between 4.0 and 6.5; irreversibly inactivated when open channels are exposed to extracellular pH between 4.0 and 6.5, while pre-exposure of closed channels to extracellular pH 5.5 gives rise to currents that rapidly inactivate, but protects against irreversible inactivation. Inactivated by intracellular ATP. Activated by arachidonic acid. Inhibited by 2-aminoethyl diphenylborinate (2-APB). Its function is as follows. Nonselective, voltage-independent cation channel that mediates Na(+) and Ca(2+) influx, leading to increased cytoplasmic Ca(2+) levels. Functions as a ligand-gated ion channel, gated by intracellular adenosine diphosphate ribose (ADP-ribose), Ca(2+), warm temperature, and oxidative stress. The precise physiological activators are under debate; the true, physiological activators may be ADP-ribose and ADP-ribose-2'-phosphate. Binding of ADP-ribose to the cytoplasmic Nudix domain causes a conformation change; the channel is primed but still requires Ca(2+) binding to trigger channel opening. Extracellular Ca(2+) passes through the channel and increases channel activity. Contributes to Ca(2+) release from intracellular stores in response to ADP-ribose. Plays a role in numerous processes that involve signaling via intracellular Ca(2+) levels. Besides, mediates the release of lysosomal Zn(2+) stores in response to reactive oxygen species, leading to increased cytosolic Zn(2+) levels. Plays a role in mediating behavorial and physiological responses to moderate heat and thereby contributes to body temperature homeostasis. Plays a role in insulin secretion, a process that requires increased cytoplasmic Ca(2+) levels. Required for normal IFNG and cytokine secretion and normal innate immune immunity in response to bacterial infection. Required for normal phagocytosis and cytokine release by macrophages exposed to zymosan (in vitro). Plays a role in dendritic cell differentiation and maturation, and in dendritic cell chemotaxis via its role in regulating cytoplasmic Ca(2+) levels. Plays a role in the regulation of the reorganization of the actin cytoskeleton and filopodia formation in response to reactive oxygen species via its role in increasing cytoplasmic Ca(2+) and Zn(2+) levels. Confers susceptibility to cell death following oxidative stress. Lacks cation channel activity. Does not mediate cation transport in response to oxidative stress or ADP-ribose. Functionally, lacks cation channel activity and negatively regulates the channel activity of isoform 1. Negatively regulates susceptibility to cell death in reposponse to oxidative stress. The protein is Transient receptor potential cation channel subfamily M member 2 (TRPM2) of Homo sapiens (Human).